The primary structure comprises 394 residues: F-box/kelch-repeat protein At1g23390 (394 aa).

The 48-residue stretch at 15 to 62 (EEESSIDGDILESILSYLPLLDLDSACQVSKSWNRAVFYSLRRLKTMP) folds into the F-box domain. 4 Kelch repeats span residues 65–111 (FVYN…RSSH), 155–204 (SLII…TWLS), 206–252 (AVSS…SIGF), and 321–369 (MVYV…VIVA).

The chain is F-box/kelch-repeat protein At1g23390 from Arabidopsis thaliana (Mouse-ear cress).